The following is a 508-amino-acid chain: MGLPWYRVHTVVLNDPGRLIAVHLMHTALVSGWAGSMALYELAVFDPSDPVLDPMWRQGMFVIPFMTRLGITKSWGGWSITGETVTNAGIWSYEGVAAVHIVLSGLLFLAAIWHWVYWDLELFRDERTGKPSLDLPKIFGIHLFLSGVLCFGFGAFHVTGLFGPGIWVSDPYGLTGKVEPVAPAWGAEGFDPFVPGGIASHHIAAGILGILAGLFHLSVRPPQRLYKGLRMGNVETVLSSSIAAVFFAAFVVAGTMWYGSAATPIELFGPTRYQWDQGFFQQEIDRRIRSSKAENLSLSEAWSKIPEKLAFYDYIGNNPAKGGLFRAGAMDNGDGIAVGWLGHAVFKDKEGHELFVRRMPTFFETFPVVLVDEEGIVRADIPFRRAESKYSVEQVGVIVEFYGGELDGVSFSDPVTVKKYARRAQLGEIFEFDRATLKSDGVFRSSPRGWFTFGHATFALLFFFGHIWHGARTLFRDVFAGIDSDLDAQVEFGAFEKLGDPTTKRQVV.

The next 6 membrane-spanning stretches (helical) occupy residues 21–36, 101–115, 140–156, 203–218, 237–252, and 457–472; these read AVHLMHTALVSGWAGS, IVLSGLLFLAAIWHW, GIHLFLSGVLCFGFGAF, IAAGILGILAGLFHLS, VLSSSIAAVFFAAFVV, and TFALLFFFGHIWHGAR.

The protein belongs to the PsbB/PsbC family. PsbB subfamily. In terms of assembly, PSII is composed of 1 copy each of membrane proteins PsbA, PsbB, PsbC, PsbD, PsbE, PsbF, PsbH, PsbI, PsbJ, PsbK, PsbL, PsbM, PsbT, PsbX, PsbY, PsbZ, Psb30/Ycf12, at least 3 peripheral proteins of the oxygen-evolving complex and a large number of cofactors. It forms dimeric complexes. It depends on Binds multiple chlorophylls. PSII binds additional chlorophylls, carotenoids and specific lipids. as a cofactor.

Its subcellular location is the plastid. It is found in the chloroplast thylakoid membrane. One of the components of the core complex of photosystem II (PSII). It binds chlorophyll and helps catalyze the primary light-induced photochemical processes of PSII. PSII is a light-driven water:plastoquinone oxidoreductase, using light energy to abstract electrons from H(2)O, generating O(2) and a proton gradient subsequently used for ATP formation. The protein is Photosystem II CP47 reaction center protein of Anthoceros angustus (Hornwort).